The sequence spans 151 residues: Large ribosomal subunit protein bL9 (151 aa).

It belongs to the bacterial ribosomal protein bL9 family.

Functionally, binds to the 23S rRNA. This Mycolicibacterium gilvum (strain PYR-GCK) (Mycobacterium gilvum (strain PYR-GCK)) protein is Large ribosomal subunit protein bL9.